Reading from the N-terminus, the 438-residue chain is Protein c-ets-1-A (438 aa).

A PNT domain is found at 49-134 (ATFSRFTKEQ…EHLEILQKDS (86 aa)). The interval 128–240 (EILQKDSKQY…DNMCLGRISR (113 aa)) is activation domain; required for transcription activation. A helix HI-1 region spans residues 301–309 (FKDYVRDRA). Residues 320–327 (AAALAGYT) are helix HI-2. The segment at residues 332–412 (IQLWQFLLEL…AGKRYVYRFV (81 aa)) is a DNA-binding region (ETS). The segment at 415–419 (LQSLL) is helix H4. A helix H5 region spans residues 423-429 (PEELHAM).

It belongs to the ETS family. Binds DNA as a homodimer; homodimerization is required for transcription activation.

It is found in the nucleus. The protein localises to the cytoplasm. Autoinhibited by a module composed of four alpha helices (HI-1, HI-2, H4, and H5) that flank the DNA-binding ETS domain, reducing the affinity for DNA. Functionally, transcription factor. Directly controls the expression of cytokine and chemokine genes in a wide variety of different cellular contexts. This is Protein c-ets-1-A (ets1-a) from Xenopus laevis (African clawed frog).